Reading from the N-terminus, the 442-residue chain is G-protein coupled receptor family C group 5 member C (442 aa).

A signal peptide spans methionine 1 to alanine 23. The Extracellular portion of the chain corresponds to glutamine 24 to glycine 50. Residues isoleucine 51–leucine 71 traverse the membrane as a helical segment. Residues valine 72–serine 85 lie on the Cytoplasmic side of the membrane. Residues leucine 86–alanine 106 form a helical membrane-spanning segment. The Extracellular portion of the chain corresponds to cysteine 107–arginine 120. A helical membrane pass occupies residues phenylalanine 121–leucine 141. Topologically, residues histidine 142–valine 155 are cytoplasmic. A helical transmembrane segment spans residues isoleucine 156–isoleucine 176. The Extracellular portion of the chain corresponds to isoleucine 177–aspartate 209. An N-linked (GlcNAc...) asparagine glycan is attached at asparagine 192. The helical transmembrane segment at phenylalanine 210 to serine 230 threads the bilayer. The Cytoplasmic segment spans residues alanine 231–histidine 242. Residues glycine 243–methionine 263 traverse the membrane as a helical segment. Residues tyrosine 264–threonine 280 are Extracellular-facing. Residues leucine 281–valine 301 traverse the membrane as a helical segment. The Cytoplasmic portion of the chain corresponds to serine 302–aspartate 442. Residues serine 345, serine 384, serine 404, and serine 407 each carry the phosphoserine modification. Tyrosine 415 is subject to Phosphotyrosine. Phosphothreonine is present on threonine 424.

Belongs to the G-protein coupled receptor 3 family.

It localises to the cell membrane. Its function is as follows. This retinoic acid-inducible G-protein coupled receptor provide evidence for a possible interaction between retinoid and G-protein signaling pathways. This Bos taurus (Bovine) protein is G-protein coupled receptor family C group 5 member C (GPRC5C).